The sequence spans 234 residues: NAD-dependent protein deacetylase (234 aa).

A Deacetylase sirtuin-type domain is found at 1-234 (MSDITAAQTT…AVDFFEGVQV (234 aa)). Residues alanine 23, threonine 27, arginine 35, glutamine 99, isoleucine 101, aspartate 102, histidine 117, threonine 184, serine 185, asparagine 208, and valine 226 each coordinate NAD(+). Isoleucine 101 and aspartate 102 together coordinate nicotinamide. Histidine 117 (proton acceptor) is an active-site residue.

This sequence belongs to the sirtuin family. Class U subfamily.

It is found in the cytoplasm. The enzyme catalyses N(6)-acetyl-L-lysyl-[protein] + NAD(+) + H2O = 2''-O-acetyl-ADP-D-ribose + nicotinamide + L-lysyl-[protein]. Its function is as follows. NAD-dependent protein deacetylase which modulates the activities of several enzymes which are inactive in their acetylated form. This chain is NAD-dependent protein deacetylase, found in Lactiplantibacillus plantarum (strain ATCC BAA-793 / NCIMB 8826 / WCFS1) (Lactobacillus plantarum).